A 92-amino-acid polypeptide reads, in one-letter code: Ribonuclease P protein component 1 (92 aa).

This sequence belongs to the eukaryotic/archaeal RNase P protein component 1 family. As to quaternary structure, consists of a catalytic RNA component and at least 4-5 protein subunits.

The protein localises to the cytoplasm. It carries out the reaction Endonucleolytic cleavage of RNA, removing 5'-extranucleotides from tRNA precursor.. In terms of biological role, part of ribonuclease P, a protein complex that generates mature tRNA molecules by cleaving their 5'-ends. The chain is Ribonuclease P protein component 1 from Desulfurococcus amylolyticus (strain DSM 18924 / JCM 16383 / VKM B-2413 / 1221n) (Desulfurococcus kamchatkensis).